Here is a 293-residue protein sequence, read N- to C-terminus: Acetylglutamate kinase (293 aa).

Substrate-binding positions include 65 to 66 (GG), Arg87, and Asn188.

Belongs to the acetylglutamate kinase family. ArgB subfamily.

Its subcellular location is the cytoplasm. It catalyses the reaction N-acetyl-L-glutamate + ATP = N-acetyl-L-glutamyl 5-phosphate + ADP. It participates in amino-acid biosynthesis; L-arginine biosynthesis; N(2)-acetyl-L-ornithine from L-glutamate: step 2/4. Its function is as follows. Catalyzes the ATP-dependent phosphorylation of N-acetyl-L-glutamate. The sequence is that of Acetylglutamate kinase from Symbiobacterium thermophilum (strain DSM 24528 / JCM 14929 / IAM 14863 / T).